The following is a 321-amino-acid chain: tRNA-dihydrouridine synthase B (321 aa).

FMN contacts are provided by residues 16-18 (PMA) and Gln-70. The active-site Proton donor is the Cys-100. FMN contacts are provided by residues Lys-139, 200-202 (NGD), and 224-225 (GR).

Belongs to the Dus family. DusB subfamily. FMN serves as cofactor.

The catalysed reaction is a 5,6-dihydrouridine in tRNA + NAD(+) = a uridine in tRNA + NADH + H(+). It catalyses the reaction a 5,6-dihydrouridine in tRNA + NADP(+) = a uridine in tRNA + NADPH + H(+). Its function is as follows. Catalyzes the synthesis of 5,6-dihydrouridine (D), a modified base found in the D-loop of most tRNAs, via the reduction of the C5-C6 double bond in target uridines. This chain is tRNA-dihydrouridine synthase B, found in Klebsiella pneumoniae.